Consider the following 80-residue polypeptide: Raniseptin-6 (80 aa).

The first 22 residues, 1–22, serve as a signal peptide directing secretion; it reads MAFLKKSLFLVLFLGIVSLSIC. The propeptide occupies 23 to 49; that stretch reads EEEKREGEEEEKQEEENEELSEEELRE.

It belongs to the frog skin active peptide (FSAP) family. Dermaseptin subfamily. In terms of tissue distribution, expressed by the skin glands.

It localises to the secreted. Functionally, has antibacterial activity. This chain is Raniseptin-6, found in Boana raniceps (Chaco tree frog).